We begin with the raw amino-acid sequence, 87 residues long: Kappa-3-bungarotoxin (87 aa).

The first 21 residues, 1 to 21, serve as a signal peptide directing secretion; sequence MKTLLLSLVVVTIVCLDLGYT. 5 disulfides stabilise this stretch: cysteine 24–cysteine 42, cysteine 35–cysteine 63, cysteine 48–cysteine 52, cysteine 67–cysteine 79, and cysteine 80–cysteine 85.

This sequence belongs to the three-finger toxin family. Long-chain subfamily. Kappa-neurotoxin sub-subfamily. Homodimer and heterodimer with kappa 2-bungarotoxin; non-covalently-linked. Expressed by the venom gland.

Its subcellular location is the secreted. Functionally, postsynaptic neurotoxin that binds and inhibits neuronal nicotinic acetylcholine receptors (nAChR) with high affinity (IC(50)&lt;100 nM). Is a selective, and slowly reversible antagonist of alpha-3/CHRNA3-containing and some alpha-4/CHRNA4-containing AChRs. The polypeptide is Kappa-3-bungarotoxin (Bungarus multicinctus (Many-banded krait)).